A 412-amino-acid chain; its full sequence is ORC1-type DNA replication protein 2 (412 aa).

Residues 61-65 (VGKTA), Tyr-207, and Arg-219 contribute to the ATP site.

It belongs to the CDC6/cdc18 family.

Functionally, involved in regulation of DNA replication. This Haloarcula marismortui (strain ATCC 43049 / DSM 3752 / JCM 8966 / VKM B-1809) (Halobacterium marismortui) protein is ORC1-type DNA replication protein 2 (cdc6b).